Here is a 345-residue protein sequence, read N- to C-terminus: Phenylalanine--tRNA ligase alpha subunit (345 aa).

Mg(2+) is bound at residue glutamate 262.

It belongs to the class-II aminoacyl-tRNA synthetase family. Phe-tRNA synthetase alpha subunit type 1 subfamily. Tetramer of two alpha and two beta subunits. Mg(2+) is required as a cofactor.

Its subcellular location is the cytoplasm. The enzyme catalyses tRNA(Phe) + L-phenylalanine + ATP = L-phenylalanyl-tRNA(Phe) + AMP + diphosphate + H(+). The sequence is that of Phenylalanine--tRNA ligase alpha subunit from Ehrlichia canis (strain Jake).